Consider the following 138-residue polypeptide: Nucleoside diphosphate kinase (138 aa).

Positions 9, 57, 85, 91, 102, and 112 each coordinate ATP. Histidine 115 acts as the Pros-phosphohistidine intermediate in catalysis.

Belongs to the NDK family. Mg(2+) serves as cofactor.

The protein resides in the cytoplasm. It catalyses the reaction a 2'-deoxyribonucleoside 5'-diphosphate + ATP = a 2'-deoxyribonucleoside 5'-triphosphate + ADP. It carries out the reaction a ribonucleoside 5'-diphosphate + ATP = a ribonucleoside 5'-triphosphate + ADP. Its function is as follows. Major role in the synthesis of nucleoside triphosphates other than ATP. The ATP gamma phosphate is transferred to the NDP beta phosphate via a ping-pong mechanism, using a phosphorylated active-site intermediate. The polypeptide is Nucleoside diphosphate kinase (Picrophilus torridus (strain ATCC 700027 / DSM 9790 / JCM 10055 / NBRC 100828 / KAW 2/3)).